The primary structure comprises 119 residues: Large ribosomal subunit protein bL20 (119 aa).

Belongs to the bacterial ribosomal protein bL20 family.

In terms of biological role, binds directly to 23S ribosomal RNA and is necessary for the in vitro assembly process of the 50S ribosomal subunit. It is not involved in the protein synthesizing functions of that subunit. This is Large ribosomal subunit protein bL20 from Nitrobacter hamburgensis (strain DSM 10229 / NCIMB 13809 / X14).